The chain runs to 354 residues: S-adenosylmethionine:tRNA ribosyltransferase-isomerase (354 aa).

It belongs to the QueA family. As to quaternary structure, monomer.

The protein localises to the cytoplasm. It carries out the reaction 7-aminomethyl-7-carbaguanosine(34) in tRNA + S-adenosyl-L-methionine = epoxyqueuosine(34) in tRNA + adenine + L-methionine + 2 H(+). It participates in tRNA modification; tRNA-queuosine biosynthesis. Transfers and isomerizes the ribose moiety from AdoMet to the 7-aminomethyl group of 7-deazaguanine (preQ1-tRNA) to give epoxyqueuosine (oQ-tRNA). This Salmonella typhi protein is S-adenosylmethionine:tRNA ribosyltransferase-isomerase.